Reading from the N-terminus, the 504-residue chain is Facilitated trehalose transporter Tret1 (504 aa).

At 1–39 the chain is on the cytoplasmic side; that stretch reads MELNNKEDSPRHTVPFVRQITEDGKAKLEIYRPTTNPIY. A helical membrane pass occupies residues 40-60; the sequence is IYTQILAAIAVSMGSMVVGFA. Over 61–87 the chain is Extracellular; it reads SAYTSPALVSMQNTTITSFKVTEQEAS. An N-linked (GlcNAc...) asparagine glycan is attached at N73. Residues 88–108 traverse the membrane as a helical segment; the sequence is WVGGIMPLAGLAGGIAGGPFI. At 109 to 120 the chain is on the cytoplasmic side; it reads EYLGRKNTILAT. The helical transmembrane segment at 121-141 threads the bilayer; the sequence is AVPFIVAWLLIAFANSIWMVL. The Extracellular portion of the chain corresponds to 142 to 145; it reads AGRA. Residues 146–166 form a helical membrane-spanning segment; sequence LSGFCVGIASLSLPVYLGETV. The Cytoplasmic segment spans residues 167–171; the sequence is QPEVR. The chain crosses the membrane as a helical span at residues 172–192; it reads GTLGLLPTAFGNIGILICFVA. Topologically, residues 193-199 are extracellular; the sequence is GKYVNWS. Residue N197 is glycosylated (N-linked (GlcNAc...) asparagine). Residues 200 to 220 form a helical membrane-spanning segment; the sequence is GLAFIGSILPIPFMVLTLLIP. Residues 221–283 are Cytoplasmic-facing; sequence ETPRWFVTRG…DLMKRSNLKP (63 aa). Residues 284-304 form a helical membrane-spanning segment; it reads LLIALGLMFFQQLSGINAVIF. At 305-320 the chain is on the extracellular side; that stretch reads YTVSIFKDAGSTIDEN. Residues 321–341 form a helical membrane-spanning segment; that stretch reads LCTIIVGVVNFGATFFATVLI. The Cytoplasmic segment spans residues 342–347; that stretch reads DRLGRK. The helical transmembrane segment at 348–368 threads the bilayer; sequence ILLYISEVAMVITLLTLGTFF. Topologically, residues 369-387 are extracellular; sequence YYKNSGNDVSNIGWLPLAS. Residues 388 to 408 form a helical membrane-spanning segment; that stretch reads FVIYVIGFSSGVGPIPWLMLG. Topologically, residues 409–424 are cytoplasmic; the sequence is EILPGKIRGSAASVAT. Residues 425–445 traverse the membrane as a helical segment; sequence GFNWTCTFIVTKTFADIVAAI. Topologically, residues 446 to 448 are extracellular; sequence GNH. The chain crosses the membrane as a helical span at residues 449 to 469; sequence GAFWFFGVICLIGLFFVIFFV. At 470-504 the chain is on the cytoplasmic side; sequence PETQGKSLEEIERKMMGRVRRMSSVANMKPLSFNM.

The protein belongs to the major facilitator superfamily. Sugar transporter (TC 2.A.1.1) family. Trehalose transporter subfamily. As to expression, highest expression in the fat body. Not expressed in other tissues including the midgut, muscle, and integuments after 24 hours of dehydration.

It is found in the cell membrane. Its function is as follows. High-capacity facilitative transporter for trehalose, required to induce anhydrobiosis. Anhydrobiotic larvae can survive almost complete dehydration. Does not transport maltose, sucrose or lactose. Mediates the bidirectional transfer of trehalose. Responsible for the transport of trehalose synthesized in the fat body and the incorporation of trehalose into other tissues that require a carbon source, thereby regulating trehalose levels in the hemolymph. This chain is Facilitated trehalose transporter Tret1, found in Polypedilum vanderplanki (Sleeping chironomid midge).